A 734-amino-acid chain; its full sequence is Photosystem I P700 chlorophyll a apoprotein A2 (734 aa).

8 helical membrane-spanning segments follow: residues 46 to 69, 135 to 158, 175 to 199, 273 to 291, 330 to 353, 369 to 395, 417 to 439, and 517 to 535; these read IFASHFGQLAIIFLWTSGNLFHVA, LYTGALFLLFLSAISLIAGWLHLQ, LNHHLSGLFGVSSLAWTGHLVHVAI, IAHHHLAIAFLFLVAGHMY, IHFQLGLALASLGVITSLVAQHMY, AALYTHHQYIAGFIMTGAFAHGAIFFI, AIKSHLSWVSLFLGFHTLGLYVH, and FLVHHAIALGLHTTTLILV. 2 residues coordinate [4Fe-4S] cluster: Cys-559 and Cys-568. A run of 2 helical transmembrane segments spans residues 575 to 596 and 643 to 665; these read AFYLAVFWMLNTIGWVTFYWHW and LSVWAWMFLFGHLVWATGFMFLI. Positions 654, 662, and 670 each coordinate chlorophyll a. A phylloquinone-binding site is contributed by Trp-671. Residues 707 to 727 form a helical membrane-spanning segment; the sequence is LVGLAHFSVGYIFTYAAFLIA.

The protein belongs to the PsaA/PsaB family. In terms of assembly, the PsaA/B heterodimer binds the P700 chlorophyll special pair and subsequent electron acceptors. PSI consists of a core antenna complex that captures photons, and an electron transfer chain that converts photonic excitation into a charge separation. The eukaryotic PSI reaction center is composed of at least 11 subunits. P700 is a chlorophyll a/chlorophyll a' dimer, A0 is one or more chlorophyll a, A1 is one or both phylloquinones and FX is a shared 4Fe-4S iron-sulfur center. is required as a cofactor.

It localises to the plastid. The protein resides in the chloroplast thylakoid membrane. It carries out the reaction reduced [plastocyanin] + hnu + oxidized [2Fe-2S]-[ferredoxin] = oxidized [plastocyanin] + reduced [2Fe-2S]-[ferredoxin]. Its function is as follows. PsaA and PsaB bind P700, the primary electron donor of photosystem I (PSI), as well as the electron acceptors A0, A1 and FX. PSI is a plastocyanin-ferredoxin oxidoreductase, converting photonic excitation into a charge separation, which transfers an electron from the donor P700 chlorophyll pair to the spectroscopically characterized acceptors A0, A1, FX, FA and FB in turn. Oxidized P700 is reduced on the lumenal side of the thylakoid membrane by plastocyanin. The protein is Photosystem I P700 chlorophyll a apoprotein A2 of Drimys granadensis.